The chain runs to 404 residues: Multidrug resistance protein MdtG (404 aa).

Helical transmembrane passes span 19 to 39, 56 to 76, 90 to 110, 113 to 133, 149 to 169, 171 to 191, 222 to 242, 254 to 274, 288 to 308, 317 to 337, and 376 to 396; these read LGCFLTGAAFSLVMPFLPLYV, LVFSITFLFSAIASPFWGGLA, LGMAIVMLLMGMAQNIWQFLI, ALLGLLGGFIPNANALIATQV, GVSGALLGPLAGGLLAGHYGL, PVFFITASVLFICFLLTFFFI, LFVTTLIIQVATGSIAPILTL, IAFISGMIASVPGVAALLSAP, ILIVALIISVLLLIPMSFVQT, FLLGAADGALLPAVQTLLVYN, and AVFCVTAGVVLFNAIYSWNSL.

It belongs to the major facilitator superfamily. DHA1 family. MdtG (TC 2.A.1.2.20) subfamily.

The protein resides in the cell inner membrane. This Salmonella paratyphi C (strain RKS4594) protein is Multidrug resistance protein MdtG.